A 502-amino-acid polypeptide reads, in one-letter code: Cytochrome P450 CYP94D109 (502 aa).

The helical transmembrane segment at 3-23 (SLSLIFISFITLIVFLVVSAS) threads the bilayer. Cys437 is a heme binding site.

The protein belongs to the cytochrome P450 family. As to expression, mainly expressed in leaves and, at low levels, in roots, fruits and stems.

It is found in the membrane. It functions in the pathway steroid metabolism; cholesterol metabolism. Its function is as follows. Involved in the biosynthesis of spiroketal steroid and saponin natural products from cholesterol such as diosgenin and analogs (e.g. furostanol and spirostanol), plant defense compounds used as main precursors for the industrial production of steroid hormones. During the 5,6-spiroketalization of cholesterol, may catalyze the 27-monohydroxylation of furostanol-type steroid to an intermediate product that undergoes a stereospecific formation of the terminal heterocycle to yield diosgenin. This chain is Cytochrome P450 CYP94D109, found in Paris polyphylla (Daiswa polyphylla).